A 331-amino-acid chain; its full sequence is Acyl-CoA desaturase 1 (331 aa).

The Cytoplasmic portion of the chain corresponds to 1–46 (MTEVDDGCGGRLRGSVLLEDECDLKQECETPTHSLVQGRDPPVVVV). A helical transmembrane segment spans residues 47–67 (WRNVVLMSVLHTAAVYGLVLL). Substrate is bound at residue Asn-49. Topologically, residues 68-71 (PSAS) are lumenal. The helical transmembrane segment at 72–90 (AYTLLAFCFVSSALGITAG) threads the bilayer. Topologically, residues 91–189 (AHRLWSHRSY…DRVVMFQRRF (99 aa)) are cytoplasmic. Fe cation is bound by residues His-92 and His-97. Residues 92–97 (HRLWSH) carry the Histidine box-1 motif. Positions 120, 127, and 128 each coordinate substrate. Residues His-129, His-132, and His-133 each coordinate Fe cation. A Histidine box-2 motif is present at residues 129-133 (HRVHH). Position 161 (Lys-161) interacts with substrate. The chain crosses the membrane as a helical span at residues 190–209 (YKHSVVVMCFLIPAMLPWFL). The Lumenal segment spans residues 210–213 (WAES). A helical membrane pass occupies residues 214-235 (LWVGYFVPVLLRYALVLNATWL). Trp-234 contacts substrate. Over 236–331 (VNSAAHMWGN…RTGDGSHRSG (96 aa)) the chain is Cytoplasmic. 4 residues coordinate Fe cation: His-241, His-270, His-273, and His-274. The short motif at 270–274 (HNYHH) is the Histidine box-3 element.

Belongs to the fatty acid desaturase type 1 family. The cofactor is Fe(2+). Expression is highest in liver, followed by brain and intestine, and lowest in spleen. Also expressed in heart, gill and muscle.

The protein resides in the endoplasmic reticulum membrane. The catalysed reaction is octadecanoyl-CoA + 2 Fe(II)-[cytochrome b5] + O2 + 2 H(+) = (9Z)-octadecenoyl-CoA + 2 Fe(III)-[cytochrome b5] + 2 H2O. In terms of biological role, stearoyl-CoA desaturase that utilizes O(2) and electrons from reduced cytochrome b5 to introduce the first double bond into saturated fatty acyl-CoA substrates. Catalyzes the insertion of a cis double bond at the delta-9 position into fatty acyl-CoA substrates including palmitoyl-CoA and stearoyl-CoA. Contributes to the biosynthesis of membrane phospholipids, cholesterol esters and triglycerides. The sequence is that of Acyl-CoA desaturase 1 from Tachysurus fulvidraco (Yellow catfish).